The primary structure comprises 356 residues: MALSSPSRILCFALALSAASLSLSFASSHDYSIVGYSPEDLESHDKLIELFENWISNFEKAYETVEEKFLRFEVFKDNLKHIDETNKKGKSYWLGLNEFADLSHEEFKKMYLGLKTDIVRRDEERSYAEFAYRDVEAVPKSVDWRKKGAVAEVKNQGSCGSCWAFSTVAAVEGINKIVTGNLTTLSEQELIDCDTTYNNGCNGGLMDYAFEYIVKNGGLRKEEDYPYSMEEGTCEMQKDESETVTINGHQDVPTNDEKSLLKALAHQPLSVAIDASGREFQFYSGGVFDGRCGVDLDHGVAAVGYGSSKGSDYIIVKNSWGPKWGEKGYIRLKRNTGKPEGLCGINKMASFPTKTK.

The N-terminal stretch at M1–A26 is a signal peptide. Positions S27–A137 are cleaved as a propeptide — activation peptide. Intrachain disulfides connect C159/C201, C193/C234, and C292/C343. The active site involves C162. The N-linked (GlcNAc...) asparagine glycan is linked to N181. Active-site residues include H298 and N318.

It belongs to the peptidase C1 family. As to quaternary structure, interacts with PRN2. As to expression, mostly expressed in roots, stems and flowers. Confined to tracheary elements, and specifically to xylem.

It is found in the vacuole. The protein localises to the cell membrane. In terms of biological role, cysteine protease involved in xylem tracheary element (TE) autolysis during xylogenesis in roots. Participates in micro autolysis within the intact central vacuole before mega autolysis is initiated by tonoplast implosion. Involved in susceptibility to the bacterial plant pathogen Ralstonia solanacearum. The protein is Cysteine protease XCP2 of Arabidopsis thaliana (Mouse-ear cress).